A 201-amino-acid chain; its full sequence is Pyridoxal 5'-phosphate synthase subunit PdxT (201 aa).

49–51 (GES) is a binding site for L-glutamine. The Nucleophile role is filled by C81. L-glutamine contacts are provided by residues R110 and 139-140 (IR). Active-site charge relay system residues include H180 and E182.

It belongs to the glutaminase PdxT/SNO family. In terms of assembly, in the presence of PdxS, forms a dodecamer of heterodimers. Only shows activity in the heterodimer.

It catalyses the reaction aldehydo-D-ribose 5-phosphate + D-glyceraldehyde 3-phosphate + L-glutamine = pyridoxal 5'-phosphate + L-glutamate + phosphate + 3 H2O + H(+). The enzyme catalyses L-glutamine + H2O = L-glutamate + NH4(+). It participates in cofactor biosynthesis; pyridoxal 5'-phosphate biosynthesis. In terms of biological role, catalyzes the hydrolysis of glutamine to glutamate and ammonia as part of the biosynthesis of pyridoxal 5'-phosphate. The resulting ammonia molecule is channeled to the active site of PdxS. The protein is Pyridoxal 5'-phosphate synthase subunit PdxT of Salinispora arenicola (strain CNS-205).